The sequence spans 515 residues: Anterior pharynx in excess protein 1 (515 aa).

The first 26 residues, 1–26, serve as a signal peptide directing secretion; the sequence is MTNFSSLLTTIFLCIISSATGSGTIE. Residues 27–392 are Extracellular-facing; sequence LLISSPQTVL…QASDELQLRL (366 aa). Residue asparagine 123 is glycosylated (N-linked (GlcNAc...) asparagine). The DSL domain maps to 130–172; the sequence is NLCSSNYHGKRCNRYCIANAKLHWECSTHGVRRCSAGWSGEDC. 14 cysteine pairs are disulfide-bonded: cysteine 132/cysteine 141, cysteine 145/cysteine 155, cysteine 163/cysteine 172, cysteine 177/cysteine 187, cysteine 181/cysteine 193, cysteine 195/cysteine 204, cysteine 213/cysteine 218, cysteine 228/cysteine 237, cysteine 244/cysteine 256, cysteine 250/cysteine 268, cysteine 270/cysteine 279, cysteine 288/cysteine 300, cysteine 294/cysteine 310, and cysteine 312/cysteine 321. 4 EGF-like domains span residues 173 to 205, 203 to 238, 240 to 280, and 284 to 322; these read SNPICAGGCSNRGRCVAPNQCSCADGFNGTRCE, RCEQCLPRAGCVNGDCVNETPNTCKCRDGFIGDRCD, DIKI…SQCK, and SKVRCSAEHVCKNGGACISMDDTNIQCKCRRGFSGKFCE. Asparagine 200 carries an N-linked (GlcNAc...) asparagine glycan. Residues 325–349 form the EGF-like 5; incomplete domain; that stretch reads NHGDCSAMRCSAGETCQISGDFAIC. Residues 393 to 413 traverse the membrane as a helical segment; sequence IAAICVLFSVCVIGLALVSFF. Topologically, residues 414-515 are cytoplasmic; sequence FYMHSFSKWK…AADDESSFRV (102 aa). 2 disordered regions span residues 427–452 and 466–494; these read SQQAGGSTILPTTTSIPMSTTSSGTG and RGNAPGSSSDSEPDHHCPPPHRHSPPPAY. Residues 431–452 are compositionally biased toward low complexity; the sequence is GGSTILPTTTSIPMSTTSSGTG.

It is found in the cell membrane. It localises to the nucleus. The protein localises to the cytoplasm. In terms of biological role, probable ligand for lin-12/Notch and glp-1/Notch receptors and involved in the mediation of Notch signaling. Involved in the lin-12/Notch pathway signaling of cell fate in vulval precursor cells (VPCs), acting redundantly with dsl-1 and lag-2. Contributes to the establishment of the dorsal-ventral axis in early embryos. Involved in the specification of the blastomere cell ABp fate, probably acting as a signal from the P2 blastomere to the glp-1/Notch receptor on ABp and ABa. Probably acts as a signal, from the secondary vulval epithelial cells and the vulval muscle type 1 (vm1) cells, to activate the lin-12/Notch pathway in type 2 vulval muscle (vm2) cells, contributing to formation of the postsynaptic muscle plasma membrane extensions, known as muscle arms. Required for oocyte growth control, acting redundantly with lag-2, perhaps signaling via the glp-1/Notch pathway. Plays a somatic role in ovulation during adulthood, perhaps via lin-12/Notch signaling. Involved in establishing left-right asymmetry during intestinal organogenesis. The protein is Anterior pharynx in excess protein 1 (apx-1) of Caenorhabditis elegans.